A 259-amino-acid polypeptide reads, in one-letter code: Complement factor D (259 aa).

An N-terminal signal peptide occupies residues 1–21; that stretch reads MADRSGHLAALILLGAAVCVA. The propeptide at 22–26 is activation peptide; the sequence is QPRGR. A Peptidase S1 domain is found at 27–254; that stretch reads ILGGQEAKSH…YVAWIDGVMA (228 aa). The cysteines at positions 52 and 68 are disulfide-linked. Active-site charge relay system residues include His67 and Asp115. Cystine bridges form between Cys149–Cys215, Cys180–Cys196, and Cys205–Cys230. The active-site Charge relay system is the Ser209. Residues 224–228 form a self-inhibitor loop region; sequence TSGSR.

The protein belongs to the peptidase S1 family. In terms of processing, CFD is activated by the removal of 5 residues at the N-terminus, named activation peptide, by the MASP-3 isoform of MASP1.

The protein resides in the secreted. It carries out the reaction Selective cleavage of Arg-|-Lys bond in complement factor B when in complex with complement subcomponent C3b or with cobra venom factor.. Circulates in plasma in a mature but self-inhibited form. Activated by factor B (CFB), which displaces the self-inhibition loop. Associates with CFB complexed with complement C3b. Serine protease that initiates the alternative pathway of the complement system, a cascade of proteins that leads to phagocytosis and breakdown of pathogens and signaling that strengthens the adaptive immune system. In contrast to other complement pathways (classical, lectin and GZMK) that are directly activated by pathogens or antigen-antibody complexes, the alternative complement pathway is initiated by the spontaneous hydrolysis of complement C3. The alternative complement pathway acts as an amplification loop that enhances complement activation by mediating the formation of C3 and C5 convertases. Activated CFD cleaves factor B (CFB) when the latter is complexed with complement C3b, activating the C3 convertase of the alternative pathway. The polypeptide is Complement factor D (CFD) (Sus scrofa (Pig)).